The sequence spans 187 residues: Dirigent protein 6 (187 aa).

The signal sequence occupies residues 1–29 (MAFLVEKQLFKALFSFFLLVLLFSDTVLS). Cys40 and Cys186 are disulfide-bonded. Asn59 and Asn123 each carry an N-linked (GlcNAc...) asparagine glycan.

It belongs to the plant dirigent protein family. Homodimer. As to expression, expressed in roots, cotyledon veins, leaf trichomes, flowers, siliques, and meristems. Present in interfascicular/vascular cambia and developing xylem.

The protein resides in the secreted. Its subcellular location is the extracellular space. It is found in the apoplast. Dirigent proteins impart stereoselectivity on the phenoxy radical-coupling reaction, yielding optically active lignans from two molecules of coniferyl alcohol in the biosynthesis of lignans, flavonolignans, and alkaloids and thus plays a central role in plant secondary metabolism. Enantiocomplementary dirigent protein that mediates the laccase-catalyzed enantioselective oxidative phenol coupling of (E)-coniferyl alcohol to (-)-pinoresinol. The chain is Dirigent protein 6 (DIR6) from Arabidopsis thaliana (Mouse-ear cress).